Consider the following 263-residue polypeptide: Leucyl/phenylalanyl-tRNA--protein transferase (263 aa).

It belongs to the L/F-transferase family.

It localises to the cytoplasm. The enzyme catalyses N-terminal L-lysyl-[protein] + L-leucyl-tRNA(Leu) = N-terminal L-leucyl-L-lysyl-[protein] + tRNA(Leu) + H(+). The catalysed reaction is N-terminal L-arginyl-[protein] + L-leucyl-tRNA(Leu) = N-terminal L-leucyl-L-arginyl-[protein] + tRNA(Leu) + H(+). It carries out the reaction L-phenylalanyl-tRNA(Phe) + an N-terminal L-alpha-aminoacyl-[protein] = an N-terminal L-phenylalanyl-L-alpha-aminoacyl-[protein] + tRNA(Phe). Its function is as follows. Functions in the N-end rule pathway of protein degradation where it conjugates Leu, Phe and, less efficiently, Met from aminoacyl-tRNAs to the N-termini of proteins containing an N-terminal arginine or lysine. The polypeptide is Leucyl/phenylalanyl-tRNA--protein transferase (Novosphingobium aromaticivorans (strain ATCC 700278 / DSM 12444 / CCUG 56034 / CIP 105152 / NBRC 16084 / F199)).